A 516-amino-acid chain; its full sequence is Probable serine/threonine-protein kinase DDB_G0293276 (516 aa).

Residues 69 to 115 form a disordered region; sequence SIEIDDENPYNTNNNNNSNNNNNNNNNNCNNSNNSNNNKNINSLDNI. Low complexity predominate over residues 79–115; the sequence is NTNNNNNSNNNNNNNNNNCNNSNNSNNNKNINSLDNI. The Protein kinase domain occupies 232–479; it reads YKHVECIGKG…SKDIKNHPYF (248 aa). ATP contacts are provided by residues 238–246 and lysine 261; that span reads IGKGGYGVV. Aspartate 350 serves as the catalytic Proton acceptor.

It belongs to the protein kinase superfamily. AGC Ser/Thr protein kinase family.

The catalysed reaction is L-seryl-[protein] + ATP = O-phospho-L-seryl-[protein] + ADP + H(+). The enzyme catalyses L-threonyl-[protein] + ATP = O-phospho-L-threonyl-[protein] + ADP + H(+). The sequence is that of Probable serine/threonine-protein kinase DDB_G0293276 from Dictyostelium discoideum (Social amoeba).